A 243-amino-acid polypeptide reads, in one-letter code: 7-cyano-7-deazaguanine synthase (243 aa).

9 to 19 (FSGGQDSTTCL) contacts ATP. Positions 205, 220, 223, and 226 each coordinate Zn(2+).

This sequence belongs to the QueC family. Zn(2+) serves as cofactor.

The enzyme catalyses 7-carboxy-7-deazaguanine + NH4(+) + ATP = 7-cyano-7-deazaguanine + ADP + phosphate + H2O + H(+). The protein operates within purine metabolism; 7-cyano-7-deazaguanine biosynthesis. Its function is as follows. Catalyzes the ATP-dependent conversion of 7-carboxy-7-deazaguanine (CDG) to 7-cyano-7-deazaguanine (preQ(0)). The polypeptide is 7-cyano-7-deazaguanine synthase (Albidiferax ferrireducens (strain ATCC BAA-621 / DSM 15236 / T118) (Rhodoferax ferrireducens)).